A 245-amino-acid polypeptide reads, in one-letter code: Bis(5'-nucleosyl)-tetraphosphatase PrpE [asymmetrical] (245 aa).

This sequence belongs to the PrpE family. The cofactor is Ni(2+).

The enzyme catalyses P(1),P(4)-bis(5'-guanosyl) tetraphosphate + H2O = GMP + GTP + 2 H(+). Asymmetrically hydrolyzes Ap4p to yield AMP and ATP. The chain is Bis(5'-nucleosyl)-tetraphosphatase PrpE [asymmetrical] from Geobacillus sp. (strain WCH70).